We begin with the raw amino-acid sequence, 743 residues long: 1,4-alpha-glucan branching enzyme GlgB (743 aa).

Catalysis depends on Asp423, which acts as the Nucleophile. Glu476 acts as the Proton donor in catalysis.

It belongs to the glycosyl hydrolase 13 family. GlgB subfamily. In terms of assembly, monomer.

The catalysed reaction is Transfers a segment of a (1-&gt;4)-alpha-D-glucan chain to a primary hydroxy group in a similar glucan chain.. The protein operates within glycan biosynthesis; glycogen biosynthesis. Functionally, catalyzes the formation of the alpha-1,6-glucosidic linkages in glycogen by scission of a 1,4-alpha-linked oligosaccharide from growing alpha-1,4-glucan chains and the subsequent attachment of the oligosaccharide to the alpha-1,6 position. The protein is 1,4-alpha-glucan branching enzyme GlgB of Pseudomonas fluorescens (strain ATCC BAA-477 / NRRL B-23932 / Pf-5).